A 773-amino-acid chain; its full sequence is Phenylalanine--tRNA ligase beta subunit (773 aa).

The tRNA-binding domain maps to 39–150; the sequence is LKAPDKVVVG…GKLELGRPLN (112 aa). The B5 domain occupies 391-467; sequence KELPIIPISI…RIIGIDNIAS (77 aa). 4 residues coordinate Mg(2+): aspartate 445, aspartate 451, glutamate 454, and glutamate 455. Residues 682-773 enclose the FDX-ACB domain; that stretch reads SKFPAITRDL…TLKNLGLDLR (92 aa).

Belongs to the phenylalanyl-tRNA synthetase beta subunit family. Type 1 subfamily. As to quaternary structure, tetramer of two alpha and two beta subunits. Mg(2+) is required as a cofactor.

The protein resides in the cytoplasm. It catalyses the reaction tRNA(Phe) + L-phenylalanine + ATP = L-phenylalanyl-tRNA(Phe) + AMP + diphosphate + H(+). The chain is Phenylalanine--tRNA ligase beta subunit (pheT) from Campylobacter jejuni subsp. jejuni serotype O:2 (strain ATCC 700819 / NCTC 11168).